The following is an 86-amino-acid chain: Large ribosomal subunit protein bL31 (86 aa).

A disordered region spans residues 65–86; sequence YGMASSDSSEQKDKSSEEKKES. Positions 73–86 are enriched in basic and acidic residues; the sequence is SEQKDKSSEEKKES.

Belongs to the bacterial ribosomal protein bL31 family. Type A subfamily. As to quaternary structure, part of the 50S ribosomal subunit.

Binds the 23S rRNA. The polypeptide is Large ribosomal subunit protein bL31 (Prochlorococcus marinus (strain NATL2A)).